Consider the following 166-residue polypeptide: Regulatory protein RecX (166 aa).

It belongs to the RecX family.

The protein resides in the cytoplasm. In terms of biological role, modulates RecA activity. In Escherichia coli (strain SE11), this protein is Regulatory protein RecX.